The sequence spans 123 residues: Small ribosomal subunit protein uS12 (123 aa).

The disordered stretch occupies residues 1–31 (MPTINQLIRKPREAQKARDKAPALQASPQKR). The segment covering 10-21 (KPREAQKARDKA) has biased composition (basic and acidic residues). At aspartate 89 the chain carries 3-methylthioaspartic acid.

Belongs to the universal ribosomal protein uS12 family. In terms of assembly, part of the 30S ribosomal subunit. Contacts proteins S8 and S17. May interact with IF1 in the 30S initiation complex.

Functionally, with S4 and S5 plays an important role in translational accuracy. In terms of biological role, interacts with and stabilizes bases of the 16S rRNA that are involved in tRNA selection in the A site and with the mRNA backbone. Located at the interface of the 30S and 50S subunits, it traverses the body of the 30S subunit contacting proteins on the other side and probably holding the rRNA structure together. The combined cluster of proteins S8, S12 and S17 appears to hold together the shoulder and platform of the 30S subunit. The protein is Small ribosomal subunit protein uS12 of Xanthobacter autotrophicus (strain ATCC BAA-1158 / Py2).